A 371-amino-acid polypeptide reads, in one-letter code: Cell division cycle-associated protein 7 (371 aa).

Disordered regions lie at residues 60 to 110 (TRSQ…EDES) and 140 to 188 (PGSF…SRIL). The segment covering 94–103 (PSENSVTDSN) has biased composition (polar residues). Position 142 is a phosphoserine (Ser142). Residues 146–170 (RHPLPGSDSQSRRPRRRTFPGVASR) form an interaction with MYC region. Residues 160–176 (RRRTFPGVASRRNPERR) carry the Nuclear localization signal motif. At Thr163 the chain carries Phosphothreonine. Position 190 is a phosphoserine (Ser190). Lys204 participates in a covalent cross-link: Glycyl lysine isopeptide (Lys-Gly) (interchain with G-Cter in SUMO2). The interval 247-371 (EEELENVCSN…SLKQEFEMQA (125 aa)) is mediates transcriptional activity.

Interacts with MYC (via C-terminus), YWHAE and YWHAZ. In terms of processing, phosphorylation at Thr-163 promotes interaction with YWHAE and YWHAZ, dissociation from MYC and sequestration in the cytoplasm. In vitro, phosphorylated at Thr-163 by AKT. Ubiquitous with higher level in thymus and small intestine. Overexpressed in a large number of tumors, in blood from patients with acute myelogenous leukemia (AML) and in chronic myelogenous leukemia (CML) blast crisis.

It is found in the nucleus. Its subcellular location is the cytoplasm. Functionally, participates in MYC-mediated cell transformation and apoptosis; induces anchorage-independent growth and clonogenicity in lymphoblastoid cells. Insufficient to induce tumorigenicity when overexpressed but contributes to MYC-mediated tumorigenesis. May play a role as transcriptional regulator. The sequence is that of Cell division cycle-associated protein 7 (CDCA7) from Homo sapiens (Human).